The sequence spans 626 residues: Alpha terpineol synthase, chloroplastic (626 aa).

The N-terminal 38 residues, Met-1–Val-38, are a transit peptide targeting the chloroplast. Asp-377, Asp-381, and Asp-529 together coordinate Mg(2+). Residues Asp-377–Asp-381 carry the DDXXD motif motif.

Belongs to the terpene synthase family. Tpsd subfamily. Requires Mg(2+) as cofactor. It depends on Mn(2+) as a cofactor.

Its subcellular location is the plastid. The protein resides in the chloroplast. It carries out the reaction (2E)-geranyl diphosphate + H2O = (S)-alpha-terpineol + diphosphate. The catalysed reaction is (2E)-geranyl diphosphate + H2O = (R)-alpha-terpineol + diphosphate. It catalyses the reaction (2E)-geranyl diphosphate + H2O = (2E)-geraniol + diphosphate. The enzyme catalyses (2E)-geranyl diphosphate = terpinolene + diphosphate. It carries out the reaction (2E)-geranyl diphosphate = (4S)-limonene + diphosphate. The protein operates within terpene metabolism; oleoresin biosynthesis. Its pathway is secondary metabolite biosynthesis; terpenoid biosynthesis. Monoterpene synthase (TPS) involved in the biosynthesis of monoterpene natural products included in conifer oleoresin secretions and volatile emissions; these compounds contribute to biotic and abiotic stress defense against herbivores and pathogens. Catalyzes the conversion of (2E)-geranyl diphosphate (GPP) to (-)-alpha-terpineol, (+)-alpha-terpineol and terpin-4-ol, and, to a lower extent, to geraniol, terpinolene and (-)-limonene. The sequence is that of Alpha terpineol synthase, chloroplastic from Pinus banksiana (Jack pine).